The primary structure comprises 878 residues: DNA mismatch repair protein MutS (878 aa).

Position 630–637 (630–637) interacts with ATP; sequence GPNMAGKS.

The protein belongs to the DNA mismatch repair MutS family.

This protein is involved in the repair of mismatches in DNA. It is possible that it carries out the mismatch recognition step. This protein has a weak ATPase activity. This is DNA mismatch repair protein MutS from Chlorobaculum tepidum (strain ATCC 49652 / DSM 12025 / NBRC 103806 / TLS) (Chlorobium tepidum).